The chain runs to 79 residues: Exodeoxyribonuclease 7 small subunit (79 aa).

This sequence belongs to the XseB family. As to quaternary structure, heterooligomer composed of large and small subunits.

It is found in the cytoplasm. It carries out the reaction Exonucleolytic cleavage in either 5'- to 3'- or 3'- to 5'-direction to yield nucleoside 5'-phosphates.. Functionally, bidirectionally degrades single-stranded DNA into large acid-insoluble oligonucleotides, which are then degraded further into small acid-soluble oligonucleotides. In Lactococcus lactis subsp. cremoris (strain MG1363), this protein is Exodeoxyribonuclease 7 small subunit.